Consider the following 479-residue polypeptide: uncharacterized protein (479 aa).

ATP contacts are provided by residues Thr-150–Lys-158, Asp-360, Arg-375, and Lys-462.

This sequence belongs to the ATP-dependent AMP-binding enzyme family.

May be involved in fatty acid metabolism. This is an uncharacterized protein from Bacillus subtilis (strain 168).